We begin with the raw amino-acid sequence, 1296 residues long: Aggregation substance (1296 aa).

Positions 1-43 (MKQQTEVKKRFKMYKAKKHWVVAPILFIGVLGVVGLATDDVQA) are cleaved as a signal peptide. Disordered regions lie at residues 48-188 (TQPG…KPAE) and 1221-1245 (HTPE…TPQA). Basic and acidic residues predominate over residues 89-99 (KVEEVASEKNG). 2 stretches are compositionally biased toward polar residues: residues 100 to 117 (AEQS…QQPT) and 125 to 138 (QEQP…TNEP). Over residues 160 to 178 (KEFETPDVDKAVDEAKKDP) the composition is skewed to basic and acidic residues. The short motif at 1261-1265 (LPQTG) is the LPXTG sorting signal element. Thr-1264 bears the Pentaglycyl murein peptidoglycan amidated threonine mark. The propeptide at 1265–1296 (GEKQNVLLTVAGSLAAMLGLAGLGFKRRKETK) is removed by sortase.

The protein belongs to the antigen I/II family.

Its subcellular location is the secreted. It localises to the cell wall. In terms of biological role, aggregation substance allows donor and recipient strains to form tight aggregates which allow the non-motile bacteria to maintain physical contact over a period of time sufficient to permit conjugative transfer of the sex pheromone plasmid from donor to recipient strains. In Enterococcus faecalis (strain ATCC 700802 / V583), this protein is Aggregation substance (asa1).